We begin with the raw amino-acid sequence, 432 residues long: Succinate--CoA ligase [GDP-forming] subunit beta, mitochondrial (432 aa).

The transit peptide at 1 to 37 (MASPVAAQAGKLLRALALRPRFLAAGSQAVQLTSRRW) directs the protein to the mitochondrion. The ATP-grasp domain occupies 46-274 (KKLMSDNGVR…NAEFRQKDIF (229 aa)). Gln57 contributes to the GTP binding site. Lys73 bears the N6-acetyllysine mark. The residue at position 78 (Lys78) is an N6-succinyllysine. A GTP-binding site is contributed by 90–92 (GRG). Residues Lys132 and Lys139 each carry the N6-acetyllysine modification. Leu146 provides a ligand contact to GTP. A Phosphoserine modification is found at Ser161. N6-acetyllysine occurs at positions 200, 218, and 227. 2 residues coordinate Mg(2+): Asn243 and Asp257. Residues Lys271 and Lys291 each carry the N6-acetyllysine modification. Residue Asn308 coordinates substrate. Lys338 bears the N6-succinyllysine mark. An N6-acetyllysine modification is found at Lys347. 365-367 (GIV) serves as a coordination point for substrate. Lys386 and Lys423 each carry N6-acetyllysine.

It belongs to the succinate/malate CoA ligase beta subunit family. GTP-specific subunit beta subfamily. Heterodimer of an alpha and a beta subunit. The beta subunit determines specificity for GTP. It depends on Mg(2+) as a cofactor. Mainly expressed in liver, kidney, heart, spleen and skeletal muscle. Also found in intestine and colon, and in low amounts in lung, brain, prostate, testis and ovary.

It is found in the mitochondrion. It carries out the reaction GTP + succinate + CoA = succinyl-CoA + GDP + phosphate. It functions in the pathway carbohydrate metabolism; tricarboxylic acid cycle; succinate from succinyl-CoA (ligase route): step 1/1. Functionally, GTP-specific succinyl-CoA synthetase functions in the citric acid cycle (TCA), coupling the hydrolysis of succinyl-CoA to the synthesis of GTP and thus represents the only step of substrate-level phosphorylation in the TCA. The beta subunit provides nucleotide specificity of the enzyme and binds the substrate succinate, while the binding sites for coenzyme A and phosphate are found in the alpha subunit. The protein is Succinate--CoA ligase [GDP-forming] subunit beta, mitochondrial of Homo sapiens (Human).